A 339-amino-acid polypeptide reads, in one-letter code: 2-halobenzoate 1,2-dioxygenase electron transfer component (339 aa).

In terms of domain architecture, 2Fe-2S ferredoxin-type spans His3 to Ser96. [2Fe-2S] cluster is bound by residues Cys40, Cys45, Cys48, and Cys80. The tract at residues Ala98–Thr336 is ferredoxin-reductase. One can recognise an FAD-binding FR-type domain in the interval Lys103–Arg203.

Belongs to the bacterial ring-hydroxylating dioxygenase ferredoxin reductase family. In terms of assembly, monomer. It is part of 2-halobenzoate dioxygenase two component enzyme system. The other component is a dioxygenase component consisting of 3 large (CbdA) subunits and 3 small (CbdB) subunits. Requires FAD as cofactor. The cofactor is [2Fe-2S] cluster.

It catalyses the reaction 2 reduced [2Fe-2S]-[ferredoxin] + NAD(+) + H(+) = 2 oxidized [2Fe-2S]-[ferredoxin] + NADH. It functions in the pathway xenobiotic degradation; benzoate degradation via CoA ligation. Its function is as follows. Electron transfer component of 2-halobenzoate 1,2-dioxygenase system. The protein is 2-halobenzoate 1,2-dioxygenase electron transfer component (cbdC) of Burkholderia cepacia (Pseudomonas cepacia).